Consider the following 419-residue polypeptide: Serine hydroxymethyltransferase (419 aa).

Residues Leu-118 and 122-124 (GHL) each bind (6S)-5,6,7,8-tetrahydrofolate. Residue Lys-227 is modified to N6-(pyridoxal phosphate)lysine.

The protein belongs to the SHMT family. In terms of assembly, homodimer. Pyridoxal 5'-phosphate is required as a cofactor.

It is found in the cytoplasm. It carries out the reaction (6R)-5,10-methylene-5,6,7,8-tetrahydrofolate + glycine + H2O = (6S)-5,6,7,8-tetrahydrofolate + L-serine. The protein operates within one-carbon metabolism; tetrahydrofolate interconversion. It participates in amino-acid biosynthesis; glycine biosynthesis; glycine from L-serine: step 1/1. Catalyzes the reversible interconversion of serine and glycine with tetrahydrofolate (THF) serving as the one-carbon carrier. This reaction serves as the major source of one-carbon groups required for the biosynthesis of purines, thymidylate, methionine, and other important biomolecules. Also exhibits THF-independent aldolase activity toward beta-hydroxyamino acids, producing glycine and aldehydes, via a retro-aldol mechanism. In Chloroflexus aurantiacus (strain ATCC 29364 / DSM 637 / Y-400-fl), this protein is Serine hydroxymethyltransferase.